Here is a 907-residue protein sequence, read N- to C-terminus: Phosphoenolpyruvate carboxylase (907 aa).

Active-site residues include H138 and K570.

This sequence belongs to the PEPCase type 1 family. The cofactor is Mg(2+).

It carries out the reaction oxaloacetate + phosphate = phosphoenolpyruvate + hydrogencarbonate. Its function is as follows. Forms oxaloacetate, a four-carbon dicarboxylic acid source for the tricarboxylic acid cycle. In Streptococcus mutans serotype c (strain ATCC 700610 / UA159), this protein is Phosphoenolpyruvate carboxylase.